Here is a 466-residue protein sequence, read N- to C-terminus: Soluble pyridine nucleotide transhydrogenase (466 aa).

Glutamate 36–cysteine 45 lines the FAD pocket.

This sequence belongs to the class-I pyridine nucleotide-disulfide oxidoreductase family. FAD serves as cofactor.

It localises to the cytoplasm. The enzyme catalyses NAD(+) + NADPH = NADH + NADP(+). In terms of biological role, conversion of NADPH, generated by peripheral catabolic pathways, to NADH, which can enter the respiratory chain for energy generation. This chain is Soluble pyridine nucleotide transhydrogenase, found in Enterobacter sp. (strain 638).